Here is a 90-residue protein sequence, read N- to C-terminus: Spore coat protein F-like protein YgzC (90 aa).

Belongs to the CotF family.

It is found in the spore coat. This chain is Spore coat protein F-like protein YgzC (ygzC), found in Bacillus subtilis (strain 168).